We begin with the raw amino-acid sequence, 562 residues long: Serine palmitoyltransferase 2 (562 aa).

Residues 61–81 traverse the membrane as a helical segment; the sequence is LITYLNYLILIILGHIHDFLG. The residue at position 365 (lysine 365) is an N6-(pyridoxal phosphate)lysine.

Belongs to the class-II pyridoxal-phosphate-dependent aminotransferase family. Pyridoxal 5'-phosphate serves as cofactor.

The protein localises to the membrane. It carries out the reaction L-serine + hexadecanoyl-CoA + H(+) = 3-oxosphinganine + CO2 + CoA. Its pathway is lipid metabolism; sphingolipid metabolism. The sequence is that of Serine palmitoyltransferase 2 (LCB2) from Kluyveromyces lactis (strain ATCC 8585 / CBS 2359 / DSM 70799 / NBRC 1267 / NRRL Y-1140 / WM37) (Yeast).